The sequence spans 462 residues: Arginine biosynthesis bifunctional protein ArgJ, mitochondrial (462 aa).

Substrate-binding residues include Thr-200, Lys-228, Thr-239, Glu-326, Asn-457, and Thr-462. The active-site Nucleophile is the Thr-239.

The protein belongs to the ArgJ family. Heterodimer of an alpha and a beta chain. Post-translationally, the alpha and beta chains are autoproteolytically processed from a single precursor protein within the mitochondrion.

It localises to the mitochondrion matrix. It carries out the reaction N(2)-acetyl-L-ornithine + L-glutamate = N-acetyl-L-glutamate + L-ornithine. The enzyme catalyses L-glutamate + acetyl-CoA = N-acetyl-L-glutamate + CoA + H(+). The protein operates within amino-acid biosynthesis; L-arginine biosynthesis; L-ornithine and N-acetyl-L-glutamate from L-glutamate and N(2)-acetyl-L-ornithine (cyclic): step 1/1. It participates in amino-acid biosynthesis; L-arginine biosynthesis; N(2)-acetyl-L-ornithine from L-glutamate: step 1/4. Its function is as follows. Catalyzes two activities which are involved in the cyclic version of arginine biosynthesis: the synthesis of acetylglutamate from glutamate and acetyl-CoA, and of ornithine by transacetylation between acetylornithine and glutamate. The protein is Arginine biosynthesis bifunctional protein ArgJ, mitochondrial of Pyrenophora tritici-repentis (strain Pt-1C-BFP) (Wheat tan spot fungus).